The sequence spans 91 residues: Large ribosomal subunit protein uL22 (91 aa).

It belongs to the universal ribosomal protein uL22 family. Part of the 50S ribosomal subunit.

Functionally, this protein binds specifically to 23S rRNA; its binding is stimulated by other ribosomal proteins, e.g. L4, L17, and L20. It is important during the early stages of 50S assembly. It makes multiple contacts with different domains of the 23S rRNA in the assembled 50S subunit and ribosome. In terms of biological role, the globular domain of the protein is located near the polypeptide exit tunnel on the outside of the subunit, while an extended beta-hairpin is found that lines the wall of the exit tunnel in the center of the 70S ribosome. The chain is Large ribosomal subunit protein uL22 (rplV) from Loofah witches'-broom phytoplasma.